Here is a 442-residue protein sequence, read N- to C-terminus: Probable serine/threonine-protein kinase kinase DDB_G0280643 (442 aa).

A Protein kinase domain is found at 74–398 (IDPNTIVDCG…VNEILESPYF (325 aa)). Residues 80 to 88 (VDCGTNGIM) and K103 contribute to the ATP site. The active-site Proton acceptor is the D231.

The protein belongs to the protein kinase superfamily. CMGC Ser/Thr protein kinase family. MAP kinase subfamily.

The catalysed reaction is L-seryl-[protein] + ATP = O-phospho-L-seryl-[protein] + ADP + H(+). It carries out the reaction L-threonyl-[protein] + ATP = O-phospho-L-threonyl-[protein] + ADP + H(+). The chain is Probable serine/threonine-protein kinase kinase DDB_G0280643 from Dictyostelium discoideum (Social amoeba).